We begin with the raw amino-acid sequence, 123 residues long: Nitrogen fixation nifHD1 region GlnB-like protein 2 (123 aa).

This sequence belongs to the P(II) protein family.

Functionally, could be involved in the regulation of nitrogen fixation. The sequence is that of Nitrogen fixation nifHD1 region GlnB-like protein 2 (glnBB) from Methanosarcina barkeri.